The chain runs to 116 residues: uncharacterized protein (116 aa).

This is an uncharacterized protein from Escherichia coli (strain K12).